A 313-amino-acid chain; its full sequence is S-methyl-5'-thioadenosine phosphorylase (313 aa).

Phosphate-binding positions include Thr20, 68–69 (RH), and 101–102 (SA). Met203 contacts substrate. Ser204 contributes to the phosphate binding site. 227 to 229 (DYD) contacts substrate.

This sequence belongs to the PNP/MTAP phosphorylase family. MTAP subfamily. In terms of assembly, homotrimer.

The protein localises to the cytoplasm. Its subcellular location is the nucleus. It catalyses the reaction S-methyl-5'-thioadenosine + phosphate = 5-(methylsulfanyl)-alpha-D-ribose 1-phosphate + adenine. It functions in the pathway amino-acid biosynthesis; L-methionine biosynthesis via salvage pathway; S-methyl-5-thio-alpha-D-ribose 1-phosphate from S-methyl-5'-thioadenosine (phosphorylase route): step 1/1. Its function is as follows. Catalyzes the reversible phosphorylation of S-methyl-5'-thioadenosine (MTA) to adenine and 5-methylthioribose-1-phosphate. Involved in the breakdown of MTA, a major by-product of polyamine biosynthesis. Responsible for the first step in the methionine salvage pathway after MTA has been generated from S-adenosylmethionine. Has broad substrate specificity with 6-aminopurine nucleosides as preferred substrates. In Ajellomyces capsulatus (strain G186AR / H82 / ATCC MYA-2454 / RMSCC 2432) (Darling's disease fungus), this protein is S-methyl-5'-thioadenosine phosphorylase.